The primary structure comprises 304 residues: Tyrosine recombinase XerC (304 aa).

Residues Ala-2–Leu-88 form the Core-binding (CB) domain. Positions Arg-109–Met-294 constitute a Tyr recombinase domain. Catalysis depends on residues Arg-149, Lys-173, His-246, Arg-249, and His-272. Tyr-281 serves as the catalytic O-(3'-phospho-DNA)-tyrosine intermediate.

It belongs to the 'phage' integrase family. XerC subfamily. As to quaternary structure, forms a cyclic heterotetrameric complex composed of two molecules of XerC and two molecules of XerD.

It localises to the cytoplasm. Its function is as follows. Site-specific tyrosine recombinase, which acts by catalyzing the cutting and rejoining of the recombining DNA molecules. The XerC-XerD complex is essential to convert dimers of the bacterial chromosome into monomers to permit their segregation at cell division. It also contributes to the segregational stability of plasmids. The polypeptide is Tyrosine recombinase XerC (Bacillus licheniformis (strain ATCC 14580 / DSM 13 / JCM 2505 / CCUG 7422 / NBRC 12200 / NCIMB 9375 / NCTC 10341 / NRRL NRS-1264 / Gibson 46)).